A 696-amino-acid polypeptide reads, in one-letter code: DNA-directed RNA polymerase subunit beta' (696 aa).

The Zn(2+) site is built by Cys69, Cys71, Cys87, and Cys90. Residues Asp504, Asp506, and Asp508 each coordinate Mg(2+).

This sequence belongs to the RNA polymerase beta' chain family. RpoC1 subfamily. In plastids the minimal PEP RNA polymerase catalytic core is composed of four subunits: alpha, beta, beta', and beta''. When a (nuclear-encoded) sigma factor is associated with the core the holoenzyme is formed, which can initiate transcription. Mg(2+) serves as cofactor. Zn(2+) is required as a cofactor.

It is found in the plastid. Its subcellular location is the chloroplast. The enzyme catalyses RNA(n) + a ribonucleoside 5'-triphosphate = RNA(n+1) + diphosphate. In terms of biological role, DNA-dependent RNA polymerase catalyzes the transcription of DNA into RNA using the four ribonucleoside triphosphates as substrates. The sequence is that of DNA-directed RNA polymerase subunit beta' from Pinus thunbergii (Japanese black pine).